Reading from the N-terminus, the 221-residue chain is Ribosomal RNA small subunit methyltransferase G (221 aa).

S-adenosyl-L-methionine is bound by residues Gly-85, Phe-90, 136–137 (AE), and Arg-149.

This sequence belongs to the methyltransferase superfamily. RNA methyltransferase RsmG family.

The protein resides in the cytoplasm. Functionally, specifically methylates the N7 position of a guanine in 16S rRNA. In Porphyromonas gingivalis (strain ATCC BAA-308 / W83), this protein is Ribosomal RNA small subunit methyltransferase G.